Consider the following 66-residue polypeptide: DNA-directed RNA polymerase subunit Rpo10 (66 aa).

4 residues coordinate Zn(2+): cysteine 7, cysteine 10, cysteine 44, and cysteine 45.

This sequence belongs to the archaeal Rpo10/eukaryotic RPB10 RNA polymerase subunit family. As to quaternary structure, part of the RNA polymerase complex. Requires Zn(2+) as cofactor.

The protein resides in the cytoplasm. It carries out the reaction RNA(n) + a ribonucleoside 5'-triphosphate = RNA(n+1) + diphosphate. Its function is as follows. DNA-dependent RNA polymerase (RNAP) catalyzes the transcription of DNA into RNA using the four ribonucleoside triphosphates as substrates. This is DNA-directed RNA polymerase subunit Rpo10 from Hyperthermus butylicus (strain DSM 5456 / JCM 9403 / PLM1-5).